We begin with the raw amino-acid sequence, 80 residues long: Exodeoxyribonuclease 7 small subunit (80 aa).

Belongs to the XseB family. In terms of assembly, heterooligomer composed of large and small subunits.

It localises to the cytoplasm. It catalyses the reaction Exonucleolytic cleavage in either 5'- to 3'- or 3'- to 5'-direction to yield nucleoside 5'-phosphates.. Its function is as follows. Bidirectionally degrades single-stranded DNA into large acid-insoluble oligonucleotides, which are then degraded further into small acid-soluble oligonucleotides. In Aliivibrio fischeri (strain ATCC 700601 / ES114) (Vibrio fischeri), this protein is Exodeoxyribonuclease 7 small subunit.